The following is a 544-amino-acid chain: (E,E)-germacrene B synthase (544 aa).

Residues D296, D300, and E449 each coordinate Mg(2+). Positions 296-300 (DDTFD) match the DDXXD motif motif.

This sequence belongs to the terpene synthase family. Mg(2+) is required as a cofactor. The cofactor is Mn(2+).

The protein resides in the cytoplasm. It carries out the reaction (2E,6E)-farnesyl diphosphate = (1E,4E)-germacrene B + diphosphate. Its pathway is secondary metabolite biosynthesis; terpenoid biosynthesis. Involved in the biosynthesis of germacrene B. The chain is (E,E)-germacrene B synthase (SSTLH1) from Solanum habrochaites (Wild tomato).